Reading from the N-terminus, the 635-residue chain is tRNA 5-methylaminomethyl-2-thiouridine biosynthesis bifunctional protein MnmC (635 aa).

The tRNA (mnm(5)s(2)U34)-methyltransferase stretch occupies residues 1 to 227; sequence MSEPIDWLPD…KRSNLQAEFD (227 aa). The interval 254 to 635 is FAD-dependent cmnm(5)s(2)U34 oxidoreductase; the sequence is IGGGLSGAAV…ALSTERLPAD (382 aa).

This sequence in the N-terminal section; belongs to the methyltransferase superfamily. tRNA (mnm(5)s(2)U34)-methyltransferase family. In the C-terminal section; belongs to the DAO family. The cofactor is FAD.

It is found in the cytoplasm. The catalysed reaction is 5-aminomethyl-2-thiouridine(34) in tRNA + S-adenosyl-L-methionine = 5-methylaminomethyl-2-thiouridine(34) in tRNA + S-adenosyl-L-homocysteine + H(+). Catalyzes the last two steps in the biosynthesis of 5-methylaminomethyl-2-thiouridine (mnm(5)s(2)U) at the wobble position (U34) in tRNA. Catalyzes the FAD-dependent demodification of cmnm(5)s(2)U34 to nm(5)s(2)U34, followed by the transfer of a methyl group from S-adenosyl-L-methionine to nm(5)s(2)U34, to form mnm(5)s(2)U34. The polypeptide is tRNA 5-methylaminomethyl-2-thiouridine biosynthesis bifunctional protein MnmC (Paracidovorax citrulli (strain AAC00-1) (Acidovorax citrulli)).